Reading from the N-terminus, the 194-residue chain is MSSSSEPTKFKMVVVGAGGVGKSALTIQLIQNHFVEDYDPTIEDSYIKQVVVDGAICILDILDTAGQEEYSAMREHYMRTGEGFLCIFAVTSLKSFQEIDNFRTQALRVKDADKVPMVLVGNKVDLPKRDVSTKDGNDKALSFGIPYVETSAKTKQGVEEAFFTLVREILADRRNQEGQKKSDSKRAKFKCTLL.

16–23 contributes to the GTP binding site; that stretch reads GAGGVGKS. The Effector region signature appears at 38-46; the sequence is YDPTIEDSY. Residues 63 to 67 and 122 to 125 contribute to the GTP site; these read DTAGQ and NKVD. Cys-191 carries the cysteine methyl ester modification. Cys-191 is lipidated: S-geranylgeranyl cysteine. The propeptide at 192–194 is removed in mature form; it reads TLL.

Belongs to the small GTPase superfamily. Ras family.

It is found in the cell membrane. The catalysed reaction is GTP + H2O = GDP + phosphate + H(+). Alternates between an inactive form bound to GDP and an active form bound to GTP. Activated by a guanine nucleotide-exchange factor (GEF) and inactivated by a GTPase-activating protein (GAP). Its function is as follows. Ras proteins bind GDP/GTP and possess intrinsic GTPase activity. The protein is Ras-like protein RAS1 (RAS1) of Hydra vulgaris (Hydra).